The chain runs to 703 residues: FERM domain-containing protein 7 (703 aa).

The FERM domain maps to 2–282; the sequence is LHLKVQFLDD…EYHAFFRLSE (281 aa). A coiled-coil region spans residues 525-552; that stretch reads RNMRIKSLQQDLQELQEAMARTSGRSNI.

As to expression, in the developing cerebral cortex, strong expression is observed in the ventricular and intermediate zones at 13 and 17 dpc. At 17 dpc and P0, expression appears to be restricted to the cortical plate. In neonates, highly expressed in cortex, hippocampus, cerebellum, olfactory bulb and eye with little or no expression in liver, kidney, skeletal muscle or heart muscle (at protein level).

Its subcellular location is the cell projection. The protein localises to the neuron projection. It is found in the growth cone. Its function is as follows. Plays a role in neurite development, may be through the activation of the GTPase RAC1. Plays a role in the control of eye movement and gaze stability. The chain is FERM domain-containing protein 7 from Mus musculus (Mouse).